We begin with the raw amino-acid sequence, 335 residues long: Protein-arginine kinase (335 aa).

Positions 21-244 (IVMSSRIRLA…NQIIHDEKQI (224 aa)) constitute a Phosphagen kinase C-terminal domain. Residues 24–28 (SSRIR), His-82, Arg-115, 166–170 (RASVM), and 197–202 (RGIYGE) contribute to the ATP site.

It belongs to the ATP:guanido phosphotransferase family.

It catalyses the reaction L-arginyl-[protein] + ATP = N(omega)-phospho-L-arginyl-[protein] + ADP + H(+). Its function is as follows. Catalyzes the specific phosphorylation of arginine residues in proteins. This Staphylococcus aureus (strain Mu3 / ATCC 700698) protein is Protein-arginine kinase.